Here is a 460-residue protein sequence, read N- to C-terminus: Cysteine--tRNA ligase (460 aa).

Cysteine 28 serves as a coordination point for Zn(2+). The short motif at 30-40 (MTVYDYCHLGH) is the 'HIGH' region element. Zn(2+)-binding residues include cysteine 209, histidine 234, and glutamate 238. Residues 266 to 270 (KMSKS) carry the 'KMSKS' region motif. Residue lysine 269 participates in ATP binding.

Belongs to the class-I aminoacyl-tRNA synthetase family. Monomer. Zn(2+) serves as cofactor.

The protein localises to the cytoplasm. It carries out the reaction tRNA(Cys) + L-cysteine + ATP = L-cysteinyl-tRNA(Cys) + AMP + diphosphate. In Pseudomonas savastanoi pv. phaseolicola (strain 1448A / Race 6) (Pseudomonas syringae pv. phaseolicola (strain 1448A / Race 6)), this protein is Cysteine--tRNA ligase.